The sequence spans 63 residues: Prokaryotic ubiquitin-like protein Pup 1 (63 aa).

2 stretches are compositionally biased toward basic and acidic residues: residues 1–12 (MSQEKVQRHGGG) and 24–33 (GQERREKLGE). The segment at 1–35 (MSQEKVQRHGGGDGEEESGPEAAGQERREKLGEDV) is disordered. The segment at 20–57 (PEAAGQERREKLGEDVDAILDEIDDVLEENAEDFVRAY) is ARC ATPase binding. Residues 25–51 (QERREKLGEDVDAILDEIDDVLEENAE) are a coiled coil. Gln63 carries the post-translational modification Deamidated glutamine. Gln63 is covalently cross-linked (Isoglutamyl lysine isopeptide (Gln-Lys) (interchain with K-? in acceptor proteins)).

It belongs to the prokaryotic ubiquitin-like protein family. In terms of assembly, strongly interacts with the proteasome-associated ATPase ARC through a hydrophobic interface; the interacting region of Pup lies in its C-terminal half. There is one Pup binding site per ARC hexamer ring. In terms of processing, is modified by deamidation of its C-terminal glutamine to glutamate by the deamidase Dop, a prerequisite to the subsequent pupylation process.

The protein operates within protein degradation; proteasomal Pup-dependent pathway. In terms of biological role, protein modifier that is covalently attached to lysine residues of substrate proteins, thereby targeting them for proteasomal degradation. The tagging system is termed pupylation. The protein is Prokaryotic ubiquitin-like protein Pup 1 of Saccharopolyspora erythraea (strain ATCC 11635 / DSM 40517 / JCM 4748 / NBRC 13426 / NCIMB 8594 / NRRL 2338).